A 446-amino-acid polypeptide reads, in one-letter code: Xanthone prenyltransferase A (446 aa).

Residues Arg113, Lys199, Tyr201, Arg263, Lys265, Tyr267, Tyr369, and Tyr440 each coordinate dimethylallyl diphosphate.

It belongs to the tryptophan dimethylallyltransferase family.

It participates in secondary metabolite biosynthesis. Functionally, xanthone prenyltransferase involved in the conversion of monodictyphenone to the prenyl xanthones such as emericellin, shamixanthone and epishamixanthone. Monodictyphenone is first converted to variecoxanthone A via a paeciloxanthone intermediate by the consecutive actions of the FAD-dependent monooxygenase mdpD and the xanthone prenyltransferase xptB. XptB catalyzes regular O-prenylation at the hydroxy group of C-7 of the xanthone ring. Variecoxanthone A is further prenylated to emericellin by xptA before being reduced to shamixanthone and epishamixanthone by the dehydrogenase xptC. The chain is Xanthone prenyltransferase A from Emericella nidulans (strain FGSC A4 / ATCC 38163 / CBS 112.46 / NRRL 194 / M139) (Aspergillus nidulans).